The primary structure comprises 324 residues: Glycerol-3-phosphate dehydrogenase [NAD(P)+] (324 aa).

Residues phenylalanine 11, arginine 31, and lysine 107 each contribute to the NADPH site. Sn-glycerol 3-phosphate is bound by residues lysine 107 and glycine 135. Residue alanine 139 participates in NADPH binding. Residues lysine 190, aspartate 245, serine 255, arginine 256, and asparagine 257 each contribute to the sn-glycerol 3-phosphate site. The active-site Proton acceptor is lysine 190. Residue arginine 256 participates in NADPH binding. Residues valine 278 and glutamate 279 each coordinate NADPH.

Belongs to the NAD-dependent glycerol-3-phosphate dehydrogenase family.

It localises to the cytoplasm. It catalyses the reaction sn-glycerol 3-phosphate + NAD(+) = dihydroxyacetone phosphate + NADH + H(+). The catalysed reaction is sn-glycerol 3-phosphate + NADP(+) = dihydroxyacetone phosphate + NADPH + H(+). The protein operates within membrane lipid metabolism; glycerophospholipid metabolism. Catalyzes the reduction of the glycolytic intermediate dihydroxyacetone phosphate (DHAP) to sn-glycerol 3-phosphate (G3P), the key precursor for phospholipid synthesis. The protein is Glycerol-3-phosphate dehydrogenase [NAD(P)+] of Anaplasma phagocytophilum (strain HZ).